The chain runs to 122 residues: Large ribosomal subunit protein uL14 (122 aa).

It belongs to the universal ribosomal protein uL14 family. As to quaternary structure, part of the 50S ribosomal subunit. Forms a cluster with proteins L3 and L19. In the 70S ribosome, L14 and L19 interact and together make contacts with the 16S rRNA in bridges B5 and B8.

Binds to 23S rRNA. Forms part of two intersubunit bridges in the 70S ribosome. The chain is Large ribosomal subunit protein uL14 from Vesicomyosocius okutanii subsp. Calyptogena okutanii (strain HA).